The chain runs to 346 residues: GTPase Obg (346 aa).

Residues 1–158 (MFVDECVVKL…GTYRLVLKSI (158 aa)) enclose the Obg domain. The OBG-type G domain occupies 159 to 332 (ADVGLVGFPN…LKKELLKRVT (174 aa)). GTP contacts are provided by residues 165–172 (GFPNAGKS), 190–194 (FTTLH), 216–219 (DVPG), 286–289 (NKMD), and 313–315 (SCL). The Mg(2+) site is built by S172 and T192.

Belongs to the TRAFAC class OBG-HflX-like GTPase superfamily. OBG GTPase family. In terms of assembly, monomer. Requires Mg(2+) as cofactor.

The protein localises to the cytoplasm. An essential GTPase which binds GTP, GDP and possibly (p)ppGpp with moderate affinity, with high nucleotide exchange rates and a fairly low GTP hydrolysis rate. Plays a role in control of the cell cycle, stress response, ribosome biogenesis and in those bacteria that undergo differentiation, in morphogenesis control. This is GTPase Obg from Opitutus terrae (strain DSM 11246 / JCM 15787 / PB90-1).